Consider the following 439-residue polypeptide: Protein dumpy-20 (439 aa).

Residues 93–116 (GTLSDPSLHGSNSSSSTSDVGSSV) are disordered. A compositionally biased stretch (low complexity) spans 96 to 116 (SDPSLHGSNSSSSTSDVGSSV). 2 consecutive BED-type zinc fingers follow at residues 135 to 184 (PTEN…YQKV) and 349 to 398 (KTEH…YNDV). Zn(2+) contacts are provided by Cys-154, Cys-157, His-172, His-177, Cys-368, Cys-371, His-386, and His-391.

In terms of biological role, involved in cuticle function and is essential for normal morphological development. The protein is Protein dumpy-20 (dpy-20) of Caenorhabditis briggsae.